We begin with the raw amino-acid sequence, 71 residues long: uncharacterized protein (71 aa).

A helical transmembrane segment spans residues 37 to 57 (IGVGVSDGVSAGVGVGVAMII).

It is found in the membrane. This is an uncharacterized protein from Dictyostelium discoideum (Social amoeba).